The primary structure comprises 314 residues: tRNA pseudouridine synthase B (314 aa).

His-43 is a binding site for substrate. The active-site Nucleophile is the Asp-48. 3 residues coordinate substrate: Tyr-76, Tyr-179, and Leu-200.

It belongs to the pseudouridine synthase TruB family. Type 1 subfamily.

The enzyme catalyses uridine(55) in tRNA = pseudouridine(55) in tRNA. Responsible for synthesis of pseudouridine from uracil-55 in the psi GC loop of transfer RNAs. This is tRNA pseudouridine synthase B from Pectobacterium atrosepticum (strain SCRI 1043 / ATCC BAA-672) (Erwinia carotovora subsp. atroseptica).